The following is a 106-amino-acid chain: Testis-specific basic protein Y 2 (106 aa).

This sequence belongs to the VCX/VCY family. Interacts with MAP1S. Interacts with UBE3A (via HECT domain). In terms of tissue distribution, expressed exclusively in testis. Expressed in ejaculated spermatozoa of germ cell. Expressed in the nuclei of spermatogonia, spermatocytes, and round spermatids, except elongated spermatids (at protein level).

The chain is Testis-specific basic protein Y 2 (BPY2) from Homo sapiens (Human).